The primary structure comprises 132 residues: D-ribose pyranase (132 aa).

The Proton donor role is filled by His-20. Substrate is bound by residues Asp-28, His-99, and 121–123 (YAN).

It belongs to the RbsD / FucU family. RbsD subfamily. Homodecamer.

It localises to the cytoplasm. The catalysed reaction is beta-D-ribopyranose = beta-D-ribofuranose. It functions in the pathway carbohydrate metabolism; D-ribose degradation; D-ribose 5-phosphate from beta-D-ribopyranose: step 1/2. Catalyzes the interconversion of beta-pyran and beta-furan forms of D-ribose. This chain is D-ribose pyranase, found in Chromobacterium violaceum (strain ATCC 12472 / DSM 30191 / JCM 1249 / CCUG 213 / NBRC 12614 / NCIMB 9131 / NCTC 9757 / MK).